A 71-amino-acid polypeptide reads, in one-letter code: Conotoxin Bu25 (71 aa).

Residues 1 to 21 form the signal peptide; sequence MGMRMMVTVFPLVVLATTVVS. Positions 22–44 are excised as a propeptide; the sequence is LRSNRASDGRRGIVNKLNDLVPK. Arginine 70 carries the arginine amide modification.

It belongs to the conotoxin A superfamily. Post-translationally, contains 3 disulfide bonds. They are not indicated here, since framework IV presents two different connectivities (I-V, II-III, IV-VI and I-III, II-V, IV-VI). Expressed by the venom duct.

It localises to the secreted. This is Conotoxin Bu25 from Conus bullatus (Bubble cone).